Consider the following 190-residue polypeptide: Adenine phosphoribosyltransferase (190 aa).

This sequence belongs to the purine/pyrimidine phosphoribosyltransferase family. Homodimer.

It is found in the cytoplasm. It carries out the reaction AMP + diphosphate = 5-phospho-alpha-D-ribose 1-diphosphate + adenine. It functions in the pathway purine metabolism; AMP biosynthesis via salvage pathway; AMP from adenine: step 1/1. Catalyzes a salvage reaction resulting in the formation of AMP, that is energically less costly than de novo synthesis. The protein is Adenine phosphoribosyltransferase of Treponema pallidum (strain Nichols).